Reading from the N-terminus, the 314-residue chain is ATP synthase gamma chain (314 aa).

The protein belongs to the ATPase gamma chain family. F-type ATPases have 2 components, CF(1) - the catalytic core - and CF(0) - the membrane proton channel. CF(1) has five subunits: alpha(3), beta(3), gamma(1), delta(1), epsilon(1). CF(0) has three main subunits: a, b and c.

It localises to the cellular thylakoid membrane. Produces ATP from ADP in the presence of a proton gradient across the membrane. The gamma chain is believed to be important in regulating ATPase activity and the flow of protons through the CF(0) complex. This Gloeothece citriformis (strain PCC 7424) (Cyanothece sp. (strain PCC 7424)) protein is ATP synthase gamma chain.